The primary structure comprises 148 residues: Arginine repressor (148 aa).

It belongs to the ArgR family.

Its subcellular location is the cytoplasm. It participates in amino-acid biosynthesis; L-arginine biosynthesis [regulation]. Its function is as follows. Regulates arginine biosynthesis genes. This chain is Arginine repressor, found in Chlorobium limicola (strain DSM 245 / NBRC 103803 / 6330).